Consider the following 34-residue polypeptide: Photosystem II reaction center protein M (34 aa).

Residues 5 to 25 (ILALIAVALFISIPTAFLVII) form a helical membrane-spanning segment.

It belongs to the PsbM family. As to quaternary structure, PSII is composed of 1 copy each of membrane proteins PsbA, PsbB, PsbC, PsbD, PsbE, PsbF, PsbH, PsbI, PsbJ, PsbK, PsbL, PsbM, PsbT, PsbX, PsbY, PsbZ, Psb30/Ycf12, at least 3 peripheral proteins of the oxygen-evolving complex and a large number of cofactors. It forms dimeric complexes.

It localises to the plastid. It is found in the chloroplast thylakoid membrane. Its function is as follows. One of the components of the core complex of photosystem II (PSII). PSII is a light-driven water:plastoquinone oxidoreductase that uses light energy to abstract electrons from H(2)O, generating O(2) and a proton gradient subsequently used for ATP formation. It consists of a core antenna complex that captures photons, and an electron transfer chain that converts photonic excitation into a charge separation. This subunit is found at the monomer-monomer interface. In Welwitschia mirabilis (Tree tumbo), this protein is Photosystem II reaction center protein M.